Reading from the N-terminus, the 118-residue chain is Mitochondrial import inner membrane translocase subunit Tim10 B (118 aa).

The Twin CX3C motif motif lies at 31 to 55 (CFQRCVPSLHHRALDAEEEACLHSC). 2 cysteine pairs are disulfide-bonded: cysteine 31–cysteine 55 and cysteine 35–cysteine 51. Positions 89–118 (SAVPHATAEQLETSPSRSLPSGNLGKGGAG) are disordered. The segment covering 98 to 109 (QLETSPSRSLPS) has biased composition (polar residues).

The protein belongs to the small Tim family. Component of the TIM22 complex, which core is composed of TIMM22, associated with TIMM10 (TIMM10A and/or TIMM10B), TIMM9, AGK and TIMM29.

Its subcellular location is the mitochondrion inner membrane. Component of the TIM22 complex, a complex that mediates the import and insertion of multi-pass transmembrane proteins into the mitochondrial inner membrane. The TIM22 complex forms a twin-pore translocase that uses the membrane potential as the external driving force. In the TIM22 complex, it may act as a docking point for the soluble 70 kDa complex that guides the target proteins in transit through the aqueous mitochondrial intermembrane space. The sequence is that of Mitochondrial import inner membrane translocase subunit Tim10 B (TIMM10B) from Bos taurus (Bovine).